The primary structure comprises 203 residues: Translation initiation factor IF-3 (203 aa).

Residues 172-182 (EAPKNEKKTKE) show a composition bias toward basic and acidic residues. The segment at 172–203 (EAPKNEKKTKENNPPFNRINLMKGENHAKNED) is disordered.

It belongs to the IF-3 family. Monomer.

It localises to the cytoplasm. Its function is as follows. IF-3 binds to the 30S ribosomal subunit and shifts the equilibrium between 70S ribosomes and their 50S and 30S subunits in favor of the free subunits, thus enhancing the availability of 30S subunits on which protein synthesis initiation begins. This chain is Translation initiation factor IF-3, found in Helicobacter pylori (strain J99 / ATCC 700824) (Campylobacter pylori J99).